The following is a 415-amino-acid chain: Gamma-glutamyl phosphate reductase (415 aa).

Belongs to the gamma-glutamyl phosphate reductase family.

It localises to the cytoplasm. It carries out the reaction L-glutamate 5-semialdehyde + phosphate + NADP(+) = L-glutamyl 5-phosphate + NADPH + H(+). The protein operates within amino-acid biosynthesis; L-proline biosynthesis; L-glutamate 5-semialdehyde from L-glutamate: step 2/2. In terms of biological role, catalyzes the NADPH-dependent reduction of L-glutamate 5-phosphate into L-glutamate 5-semialdehyde and phosphate. The product spontaneously undergoes cyclization to form 1-pyrroline-5-carboxylate. The protein is Gamma-glutamyl phosphate reductase of Clostridium perfringens (strain 13 / Type A).